A 461-amino-acid chain; its full sequence is tRNA modification GTPase MnmE (461 aa).

(6S)-5-formyl-5,6,7,8-tetrahydrofolate is bound by residues arginine 27, glutamate 89, and arginine 128. The TrmE-type G domain maps to 224–382 (GLATAIVGRP…LENAIEKLFF (159 aa)). Asparagine 234 is a K(+) binding site. GTP is bound by residues 234–239 (NVGKSS), 253–259 (TDIAGTT), and 278–281 (DTAG). Serine 238 is a binding site for Mg(2+). K(+) is bound by residues threonine 253, isoleucine 255, and threonine 258. Threonine 259 provides a ligand contact to Mg(2+). A (6S)-5-formyl-5,6,7,8-tetrahydrofolate-binding site is contributed by lysine 461.

Belongs to the TRAFAC class TrmE-Era-EngA-EngB-Septin-like GTPase superfamily. TrmE GTPase family. In terms of assembly, homodimer. Heterotetramer of two MnmE and two MnmG subunits. Requires K(+) as cofactor.

It localises to the cytoplasm. Functionally, exhibits a very high intrinsic GTPase hydrolysis rate. Involved in the addition of a carboxymethylaminomethyl (cmnm) group at the wobble position (U34) of certain tRNAs, forming tRNA-cmnm(5)s(2)U34. In Lactobacillus gasseri (strain ATCC 33323 / DSM 20243 / BCRC 14619 / CIP 102991 / JCM 1131 / KCTC 3163 / NCIMB 11718 / NCTC 13722 / AM63), this protein is tRNA modification GTPase MnmE.